The primary structure comprises 361 residues: Biotin synthase (361 aa).

The Radical SAM core domain maps to N63–R290. The [4Fe-4S] cluster site is built by C78, C82, and C85. 4 residues coordinate [2Fe-2S] cluster: C122, C153, C213, and R285.

Belongs to the radical SAM superfamily. Biotin synthase family. In terms of assembly, homodimer. It depends on [4Fe-4S] cluster as a cofactor. The cofactor is [2Fe-2S] cluster.

It catalyses the reaction (4R,5S)-dethiobiotin + (sulfur carrier)-SH + 2 reduced [2Fe-2S]-[ferredoxin] + 2 S-adenosyl-L-methionine = (sulfur carrier)-H + biotin + 2 5'-deoxyadenosine + 2 L-methionine + 2 oxidized [2Fe-2S]-[ferredoxin]. It functions in the pathway cofactor biosynthesis; biotin biosynthesis; biotin from 7,8-diaminononanoate: step 2/2. Its function is as follows. Catalyzes the conversion of dethiobiotin (DTB) to biotin by the insertion of a sulfur atom into dethiobiotin via a radical-based mechanism. This chain is Biotin synthase, found in Paraburkholderia phytofirmans (strain DSM 17436 / LMG 22146 / PsJN) (Burkholderia phytofirmans).